The sequence spans 549 residues: Glucose-6-phosphate isomerase (549 aa).

E353 serves as the catalytic Proton donor. Catalysis depends on residues H384 and K512.

Belongs to the GPI family.

The protein resides in the cytoplasm. It carries out the reaction alpha-D-glucose 6-phosphate = beta-D-fructose 6-phosphate. It participates in carbohydrate biosynthesis; gluconeogenesis. It functions in the pathway carbohydrate degradation; glycolysis; D-glyceraldehyde 3-phosphate and glycerone phosphate from D-glucose: step 2/4. In terms of biological role, catalyzes the reversible isomerization of glucose-6-phosphate to fructose-6-phosphate. This is Glucose-6-phosphate isomerase from Solidesulfovibrio magneticus (strain ATCC 700980 / DSM 13731 / RS-1) (Desulfovibrio magneticus).